The sequence spans 553 residues: Arylsulfatase K (553 aa).

Positions 1-16 are cleaved as a signal peptide; it reads MLLLLVSVVAALALAA. Ca(2+) is bound by residues D40 and C80. C80 serves as the catalytic Nucleophile. A 3-oxoalanine (Cys) modification is found at C80. The N-linked (GlcNAc...) asparagine glycan is linked to N108. K128 contacts substrate. The N-linked (GlcNAc...) asparagine glycan is linked to N191. H249 contributes to the substrate binding site. N260 carries N-linked (GlcNAc...) asparagine glycosylation. Residues D311 and H312 each contribute to the Ca(2+) site. Residues N373, N411, and N496 are each glycosylated (N-linked (GlcNAc...) asparagine). Residues 530–553 are disordered; that stretch reads SPLASSPTQSTSGSQPTLPQSTSG. Low complexity predominate over residues 534 to 553; that stretch reads SSPTQSTSGSQPTLPQSTSG.

Belongs to the sulfatase family. The cofactor is Ca(2+). In terms of processing, the conversion to 3-oxoalanine (also known as C-formylglycine, FGly), of a serine or cysteine residue in prokaryotes and of a cysteine residue in eukaryotes, is critical for catalytic activity. The 75-kDa precursor undergoes proteolytic processing to yield a 23 kDa form. Post-translationally, N-glycosylated with both high mannose and complex type sugars.

Its subcellular location is the secreted. It localises to the lysosome. The enzyme catalyses an aryl sulfate + H2O = a phenol + sulfate + H(+). It catalyses the reaction Hydrolysis of the 2-sulfate groups of the 2-O-sulfo-D-glucuronate residues of chondroitin sulfate, heparin and heparitin sulfate.. Its function is as follows. Catalyzes the hydrolysis of pseudosubstrates such as p-nitrocatechol sulfate and p-nitrophenyl sulfate. Catalyzes the hydrolysis of the 2-sulfate groups of the 2-O-sulfo-D-glucuronate residues of chondroitin sulfate, heparin and heparitin sulfate. Acts selectively on 2-sulfoglucuronate and lacks activity against 2-sulfoiduronate. In Mus musculus (Mouse), this protein is Arylsulfatase K (Arsk).